A 137-amino-acid polypeptide reads, in one-letter code: Structural protein A137R (137 aa).

This sequence belongs to the asfivirus A137R family. As to quaternary structure, interacts with host TBK1.

It localises to the virion. Its subcellular location is the host cytoplasm. Its function is as follows. Plays a role in the inhibition of the host innate immune response. Mechanistically, promotes the autophagy-mediated lysosomal degradation of host TBK1 and affects IRF3 nuclear translocation to block type I IFN production. In Ornithodoros (relapsing fever ticks), this protein is Structural protein A137R.